The chain runs to 550 residues: Beta-cubebene synthase (550 aa).

Residues Asp-303, Asp-307, Asp-447, and Glu-455 each contribute to the Mg(2+) site. Residues 303–307 (DDTYD) carry the DDXXD motif motif.

It belongs to the terpene synthase family. Tpsa subfamily. Mg(2+) is required as a cofactor. As to expression, expressed in young developing leaves and in stamens. Not detected in tepals and carpels.

It carries out the reaction (2E,6E)-farnesyl diphosphate = beta-cubebene + diphosphate. It functions in the pathway secondary metabolite biosynthesis; terpenoid biosynthesis. Functionally, sesquiterpene synthase converting farnesyl diphosphate into beta-cubebene (24.5%), alpha-muurolene (19.3%), delta-cadinol (18.6%), delta-elemene (16.0%), tau-muurolene (10.8%), and beta-elemene (10.8%). No activity with geranyl diphosphate or geranylgeranyl diphosphate. The sequence is that of Beta-cubebene synthase from Magnolia grandiflora (Southern magnolia).